A 223-amino-acid chain; its full sequence is Urease accessory protein UreG (223 aa).

The disordered stretch occupies residues 1-30; sequence MAKHSHDHTHDHHDRPRRVRKPGEPLRIGV. 32-39 serves as a coordination point for GTP; the sequence is GPVGSGKT.

The protein belongs to the SIMIBI class G3E GTPase family. UreG subfamily. Homodimer. UreD, UreF and UreG form a complex that acts as a GTP-hydrolysis-dependent molecular chaperone, activating the urease apoprotein by helping to assemble the nickel containing metallocenter of UreC. The UreE protein probably delivers the nickel.

The protein resides in the cytoplasm. Its function is as follows. Facilitates the functional incorporation of the urease nickel metallocenter. This process requires GTP hydrolysis, probably effectuated by UreG. This is Urease accessory protein UreG from Mycobacterium ulcerans (strain Agy99).